The following is a 359-amino-acid chain: Non-functional pseudokinase ZRK2 (359 aa).

The segment covering 1 to 10 (MKSMVKKLKQ) has biased composition (basic residues). The disordered stretch occupies residues 1-20 (MKSMVKKLKQSLRSGSLEKR). The Protein kinase domain occupies 64 to 356 (LKATSNFGSS…KELKQIETLF (293 aa)). ATP is bound by residues 70-78 (FGSSCFVTA) and Lys-97.

This sequence belongs to the protein kinase superfamily. Ser/Thr protein kinase family. ZRK subfamily.

The sequence is that of Non-functional pseudokinase ZRK2 from Arabidopsis thaliana (Mouse-ear cress).